A 610-amino-acid polypeptide reads, in one-letter code: MIQVLLVTICLAVFPYQGSSIILESGNVNDYEVVYPRKVPALPKGAVQPKYEDAMQYEFKVNGEPVVLHLEKNKGLFSEDYSETHYSPDGREITTNPPVEDHCYYHGRIQNDADSTASISACNGLKGHFTLQGETYLIEPLKLPDSEAHAVFKYENVEKEDEAPKMCGVTQNWESYEPIKKASQSNLTPEQQRYLNAKKYVKLVMVADYIMYLKYDRNLTTVRTRMYDIVNVINVIYQRMNIHVALVGLEIWSNKDKFILRSAADVTLKLFATWRETDLLKRKSHDNAQLLTGINFNGPTAGLGYLGGICNPMYSAGIVQDHNKIHHLVAIAMAHEMGHNLGIDHDKDTCTCGAKSCVMAGTLSCEASYLFSDCSRKEHQAFLIKDMPQCILKKPLKTDVVSPPVCGNYFVEVGEDCDCGSPATCRDSCCDAATCKLRQGAQCAEGLCCDQCRFKGAGTECRAATDECDMADLCTGRSAECTDRFQRNGQPCQNNNGYCYNGKCPIMTDQCIALFGPNAAVSEDACFQFNLEGNHYGYCRKEQNTKIACEPQNVKCGRLYCIDSSPANKNPCNIYYSPGDEDKGMVLPGTKCADGKACSNGQCVDVNRAS.

Positions 1-20 (MIQVLLVTICLAVFPYQGSS) are cleaved as a signal peptide. Positions 21–182 (IILESGNVND…WESYEPIKKA (162 aa)) are excised as a propeptide. The region spanning 199 to 395 (KYVKLVMVAD…DMPQCILKKP (197 aa)) is the Peptidase M12B domain. Asparagine 218 carries N-linked (GlcNAc...) asparagine glycosylation. Disulfide bonds link cysteine 310–cysteine 390, cysteine 350–cysteine 374, and cysteine 352–cysteine 357. Histidine 335 serves as a coordination point for Zn(2+). Residue glutamate 336 is part of the active site. The Zn(2+) site is built by histidine 339 and histidine 345. Residues 403-488 (PPVCGNYFVE…AECTDRFQRN (86 aa)) form the Disintegrin domain. Valine 405, asparagine 408, phenylalanine 410, glutamate 412, glutamate 415, and aspartate 418 together coordinate Ca(2+). 14 cysteine pairs are disulfide-bonded: cysteine 406/cysteine 435, cysteine 417/cysteine 430, cysteine 419/cysteine 425, cysteine 429/cysteine 452, cysteine 443/cysteine 449, cysteine 448/cysteine 474, cysteine 461/cysteine 481, cysteine 468/cysteine 499, cysteine 492/cysteine 504, cysteine 511/cysteine 561, cysteine 526/cysteine 572, cysteine 539/cysteine 549, cysteine 556/cysteine 598, and cysteine 592/cysteine 603. Residues 467–469 (ECD) carry the D/ECD-tripeptide motif.

Belongs to the venom metalloproteinase (M12B) family. P-III subfamily. P-IIIa sub-subfamily. In terms of assembly, monomer. Zn(2+) serves as cofactor. Expressed by the venom gland.

The protein resides in the secreted. Its activity is regulated as follows. Inhibited by EDTA and EGTA. Not inhibited by PMSF, antipain, pepstatin, and iodoacetamide. Its function is as follows. Strongly inhibits the collagen-induced human platelet aggregation (inhibition of alpha-2/beta-1 (ITGA2/ITGB1) integrin). Hydrolyzes the Aalpha-chain of fibrinogen, without cleavage of Bbeta- and gamma-chains. Degrades type IV collagen (but not types I, II and V), fibronectin and vitronectin and also integrins alpha-1/beta-1 (ITGA1/ITGB1) and alpha-5/beta/1 (ITGA5/ITGB1) (but not alpha-V/beta-3 (ITGAV/ITGB3) and alpha-V/beta-5 (ITGAV/ITGB5) integrins). Both metalloproteinase (peptidase M12B) and disintegrin-like domains (recombinantly expressed and named halydin) play characteristic roles to inhibit human platelet aggregation. Induces apoptosis and strongly inhibits proliferation of endothelial cells as well as adhesion of the cells to extracellular matrix proteins. The apoptosis is closely associated with activation of caspase-3 and decreased level of Bcl-X(L)/Bax. Apohalysase, which lacks metalloprotease activity, is also able to induce the apoptosis. Cleaves insulin B chain at '34-His-|-Leu-35', '37-Glu-|-Ala-38', '38-Ala-|-Leu-39', '39-Leu-|-Tyr-40', '40-Tyr-|-Leu-41', '47-Gly-|-Phe-48' and '48-Phe-|-Phe-49' bonds. The protein is Zinc metalloproteinase-disintegrin-like halysase of Gloydius halys (Chinese water mocassin).